A 178-amino-acid polypeptide reads, in one-letter code: ATP synthase subunit b, chloroplastic (178 aa).

Residues 34 to 50 (LAILTGGIFYLGSNALS) form a helical membrane-spanning segment.

Belongs to the ATPase B chain family. As to quaternary structure, F-type ATPases have 2 components, F(1) - the catalytic core - and F(0) - the membrane proton channel. F(1) has five subunits: alpha(3), beta(3), gamma(1), delta(1), epsilon(1). F(0) has four main subunits: a(1), b(1), b'(1) and c(10-14). The alpha and beta chains form an alternating ring which encloses part of the gamma chain. F(1) is attached to F(0) by a central stalk formed by the gamma and epsilon chains, while a peripheral stalk is formed by the delta, b and b' chains.

The protein resides in the plastid. It is found in the chloroplast thylakoid membrane. Functionally, f(1)F(0) ATP synthase produces ATP from ADP in the presence of a proton or sodium gradient. F-type ATPases consist of two structural domains, F(1) containing the extramembraneous catalytic core and F(0) containing the membrane proton channel, linked together by a central stalk and a peripheral stalk. During catalysis, ATP synthesis in the catalytic domain of F(1) is coupled via a rotary mechanism of the central stalk subunits to proton translocation. Its function is as follows. Component of the F(0) channel, it forms part of the peripheral stalk, linking F(1) to F(0). This chain is ATP synthase subunit b, chloroplastic, found in Ochrosphaera neapolitana.